The following is a 485-amino-acid chain: Aspartyl/glutamyl-tRNA(Asn/Gln) amidotransferase subunit B (485 aa).

This sequence belongs to the GatB/GatE family. GatB subfamily. As to quaternary structure, heterotrimer of A, B and C subunits.

The catalysed reaction is L-glutamyl-tRNA(Gln) + L-glutamine + ATP + H2O = L-glutaminyl-tRNA(Gln) + L-glutamate + ADP + phosphate + H(+). It carries out the reaction L-aspartyl-tRNA(Asn) + L-glutamine + ATP + H2O = L-asparaginyl-tRNA(Asn) + L-glutamate + ADP + phosphate + 2 H(+). Its function is as follows. Allows the formation of correctly charged Asn-tRNA(Asn) or Gln-tRNA(Gln) through the transamidation of misacylated Asp-tRNA(Asn) or Glu-tRNA(Gln) in organisms which lack either or both of asparaginyl-tRNA or glutaminyl-tRNA synthetases. The reaction takes place in the presence of glutamine and ATP through an activated phospho-Asp-tRNA(Asn) or phospho-Glu-tRNA(Gln). This Cupriavidus pinatubonensis (strain JMP 134 / LMG 1197) (Cupriavidus necator (strain JMP 134)) protein is Aspartyl/glutamyl-tRNA(Asn/Gln) amidotransferase subunit B.